Reading from the N-terminus, the 190-residue chain is RNA pyrophosphohydrolase (190 aa).

The Nudix hydrolase domain occupies 6–149 (GYRPNVGIVL…KRGVYARALC (144 aa)). The Nudix box motif lies at 38-59 (GGMHSDETPVEAMYRELNEEIG).

Belongs to the Nudix hydrolase family. RppH subfamily. A divalent metal cation is required as a cofactor.

Its function is as follows. Accelerates the degradation of transcripts by removing pyrophosphate from the 5'-end of triphosphorylated RNA, leading to a more labile monophosphorylated state that can stimulate subsequent ribonuclease cleavage. This is RNA pyrophosphohydrolase from Xylella fastidiosa (strain M12).